A 135-amino-acid chain; its full sequence is HTH-type transcriptional activator AarP (135 aa).

Residues 22-120 (SEILVWIEGN…GISPSLYRLS (99 aa)) enclose the HTH araC/xylS-type domain. 2 consecutive DNA-binding regions (H-T-H motif) follow at residues 39-60 (DDIA…RKIV) and 87-110 (VIDI…KAYL).

In terms of biological role, transcriptional activator of 2'-N-acetyltransferase. This is HTH-type transcriptional activator AarP (aarP) from Providencia stuartii.